A 1316-amino-acid chain; its full sequence is DNA-directed RNA polymerase subunit beta' (1316 aa).

The Zn(2+) site is built by Cys60, Cys62, Cys75, and Cys78. Mg(2+) contacts are provided by Asp535, Asp537, and Asp539. Zn(2+) contacts are provided by Cys891, Cys968, Cys975, and Cys978.

This sequence belongs to the RNA polymerase beta' chain family. In terms of assembly, the RNAP catalytic core consists of 2 alpha, 1 beta, 1 beta' and 1 omega subunit. When a sigma factor is associated with the core the holoenzyme is formed, which can initiate transcription. Requires Mg(2+) as cofactor. Zn(2+) serves as cofactor.

The catalysed reaction is RNA(n) + a ribonucleoside 5'-triphosphate = RNA(n+1) + diphosphate. Its function is as follows. DNA-dependent RNA polymerase catalyzes the transcription of DNA into RNA using the four ribonucleoside triphosphates as substrates. The polypeptide is DNA-directed RNA polymerase subunit beta' (Mycobacterium marinum (strain ATCC BAA-535 / M)).